Consider the following 458-residue polypeptide: UPF0210 protein Maeo_1412 (458 aa).

It belongs to the UPF0210 family.

This chain is UPF0210 protein Maeo_1412, found in Methanococcus aeolicus (strain ATCC BAA-1280 / DSM 17508 / OCM 812 / Nankai-3).